A 683-amino-acid chain; its full sequence is MADPENEVLRSTFPSYMAEGERLYLCGEFAKAAHSFSNALHLQSGDKNCLVARSKCFLKMGELEKSLEDAEASLQGDPTFCKGILQKAETLYTMGDFEFALVFYHRGYKLRPDREFKVGIQKAQEAINNSVGSPSSIKLENKGDLSFLSKQAESMRAQQKPHPVRQLIHHPKRESKRKGSLKSEKIVRQLLGELYVDKEYLEKLLLDEDLIKGTIKHGLTVEDLIMTGINYLETRSDFWRQQKPIYARERDRKLMQEKWLRDRKRRPSQTARYILKSLEDIDMLLTSGSAEGSLQKAEKVLKKVLEWNKEEVPNKDELVGNLYSCIGNAQIELGQMVAALQSHRKDLEIAKEYDLPDAKSRALDNIGRVFARVGKFQQAIDTWEEKIPLAKTTLEKTWLFHEIGRCYLELDQAWEAQSYGEKSQQCAEEEGDMEWQLNASVLVAQAQVKLRDFESAVNNFEKALERAKLVHNNEAQQAIINALDDANKGIIEELKKTNYREILKEKKEKENATMLDGQTRTAKEKETRKTKDEPEKVMKQWVQEQTEKQLEGVLSKETLGVTARQPEQRQREDPEKASWRKELGAKERGPGDTAKGQFGEAGRTEQNREETREIYRRPSELDQNLSDESSPRESEGLEKRLSKTDGGELEALGKTESGEIKEMEITENSEKIEKDEKEDEPIE.

TPR repeat units lie at residues 13-46 (FPSY…QSGD), 47-80 (KNCL…DPTF), 48-80 (NCLV…DPTF), and 81-114 (CKGI…RPDR). The interval 158 to 179 (QQKPHPVRQLIHHPKRESKRKG) is disordered. A compositionally biased stretch (basic residues) spans 167 to 179 (LIHHPKRESKRKG). 5 TPR repeats span residues 275-311 (LKSL…NKEE), 320-353 (GNLY…AKEY), 360-393 (SRAL…AKTT), 397-430 (TWLF…AEEE), and 437-470 (LNAS…AKLV). Disordered regions lie at residues 510 to 537 (ENAT…PEKV) and 553 to 683 (VLSK…EPIE). Basic and acidic residues-rich tracts occupy residues 521–537 (TAKE…PEKV), 566–590 (PEQR…ERGP), 602–620 (GRTE…RPSE), and 629–675 (SSPR…IEKD). A TPR 15 repeat occupies 592–625 (DTAKGQFGEAGRTEQNREETREIYRRPSELDQNL).

In terms of assembly, component of the outer dynein arm-docking complex along with ODAD1, ODAD2 and ODAD3. Interacts with ODAD1; this interaction may facilitate the recruitment and/or attachment of outer dynein arm docking complex proteins, including ODAD1, ODAD3 and ODAD2, to ciliary axonemes. Interacts with components of the IFT complex A, including IFT140, TTC21B/IFT139 and WDR19/IFT144, and the IFT complex B, including IFT46, IFT52 and IFT57. Interacts with CFAP53. Expressed in trachea multiciliated cells.

The protein resides in the cytoplasm. Its subcellular location is the cytoskeleton. It is found in the cilium axoneme. In terms of biological role, component of the outer dynein arm-docking complex (ODA-DC) that mediates outer dynein arms (ODA) binding onto the doublet microtubule. Plays an essential role for the assembly of ODA-DC and for the docking of ODA in ciliary axoneme. The protein is Outer dynein arm-docking complex subunit 4 of Bos taurus (Bovine).